A 410-amino-acid polypeptide reads, in one-letter code: Cysteine desulfurase IscS (410 aa).

Pyridoxal 5'-phosphate contacts are provided by residues 80 to 81, N160, Q188, and 208 to 210; these read AT and SGH. K211 bears the N6-(pyridoxal phosphate)lysine mark. T248 provides a ligand contact to pyridoxal 5'-phosphate. The Cysteine persulfide intermediate role is filled by C334. C334 serves as a coordination point for [2Fe-2S] cluster.

Belongs to the class-V pyridoxal-phosphate-dependent aminotransferase family. NifS/IscS subfamily. As to quaternary structure, homodimer. Forms a heterotetramer with IscU, interacts with other sulfur acceptors. The cofactor is pyridoxal 5'-phosphate.

It localises to the cytoplasm. It catalyses the reaction (sulfur carrier)-H + L-cysteine = (sulfur carrier)-SH + L-alanine. The protein operates within cofactor biosynthesis; iron-sulfur cluster biosynthesis. Its function is as follows. Master enzyme that delivers sulfur to a number of partners involved in Fe-S cluster assembly, tRNA modification or cofactor biosynthesis. Catalyzes the removal of elemental sulfur atoms from cysteine to produce alanine. Functions as a sulfur delivery protein for Fe-S cluster synthesis onto IscU, an Fe-S scaffold assembly protein, as well as other S acceptor proteins. The chain is Cysteine desulfurase IscS from Rickettsia conorii (strain ATCC VR-613 / Malish 7).